The primary structure comprises 72 residues: Large ribosomal subunit protein bL28 (72 aa).

Belongs to the bacterial ribosomal protein bL28 family.

The protein is Large ribosomal subunit protein bL28 of Chlorobium limicola (strain DSM 245 / NBRC 103803 / 6330).